Reading from the N-terminus, the 580-residue chain is Arginine--tRNA ligase (580 aa).

Positions 127-137 (PNTHKELHVGH) match the 'HIGH' region motif.

Belongs to the class-I aminoacyl-tRNA synthetase family. In terms of assembly, monomer.

The protein resides in the cytoplasm. The catalysed reaction is tRNA(Arg) + L-arginine + ATP = L-arginyl-tRNA(Arg) + AMP + diphosphate. The sequence is that of Arginine--tRNA ligase from Bdellovibrio bacteriovorus (strain ATCC 15356 / DSM 50701 / NCIMB 9529 / HD100).